The primary structure comprises 186 residues: dCTP deaminase, dUMP-forming (186 aa).

DCTP is bound by residues 99–104 (KSSIAR), Asp117, 125–127 (TLE), Gln146, Tyr159, Lys166, and Gln170. Glu127 acts as the Proton donor/acceptor in catalysis.

It belongs to the dCTP deaminase family. Homotrimer.

The catalysed reaction is dCTP + 2 H2O = dUMP + NH4(+) + diphosphate. It functions in the pathway pyrimidine metabolism; dUMP biosynthesis; dUMP from dCTP: step 1/1. In terms of biological role, bifunctional enzyme that catalyzes both the deamination of dCTP to dUTP and the hydrolysis of dUTP to dUMP without releasing the toxic dUTP intermediate. In Methanosphaerula palustris (strain ATCC BAA-1556 / DSM 19958 / E1-9c), this protein is dCTP deaminase, dUMP-forming.